The sequence spans 398 residues: Acetate kinase (398 aa).

Asn-7 contacts Mg(2+). Residue Lys-14 participates in ATP binding. Position 91 (Arg-91) interacts with substrate. Asp-148 (proton donor/acceptor) is an active-site residue. ATP-binding positions include His-208 to Gly-212, Asp-283 to Arg-285, and Gly-331 to Asn-335. A Mg(2+)-binding site is contributed by Glu-385.

The protein belongs to the acetokinase family. In terms of assembly, homodimer. The cofactor is Mg(2+). Requires Mn(2+) as cofactor.

The protein localises to the cytoplasm. The enzyme catalyses acetate + ATP = acetyl phosphate + ADP. It functions in the pathway metabolic intermediate biosynthesis; acetyl-CoA biosynthesis; acetyl-CoA from acetate: step 1/2. Catalyzes the formation of acetyl phosphate from acetate and ATP. Can also catalyze the reverse reaction. This chain is Acetate kinase, found in Porphyromonas gingivalis (strain ATCC 33277 / DSM 20709 / CIP 103683 / JCM 12257 / NCTC 11834 / 2561).